A 921-amino-acid polypeptide reads, in one-letter code: Isoleucine--tRNA ligase (921 aa).

The short motif at 57–67 (PYANGDIHMGH) is the 'HIGH' region element. Residue Glu552 participates in L-isoleucyl-5'-AMP binding. The short motif at 593 to 597 (KMSKS) is the 'KMSKS' region element. ATP is bound at residue Lys596. Residues Cys888, Cys891, Cys908, and Cys911 each contribute to the Zn(2+) site.

It belongs to the class-I aminoacyl-tRNA synthetase family. IleS type 1 subfamily. In terms of assembly, monomer. Zn(2+) is required as a cofactor.

The protein resides in the cytoplasm. The catalysed reaction is tRNA(Ile) + L-isoleucine + ATP = L-isoleucyl-tRNA(Ile) + AMP + diphosphate. Functionally, catalyzes the attachment of isoleucine to tRNA(Ile). As IleRS can inadvertently accommodate and process structurally similar amino acids such as valine, to avoid such errors it has two additional distinct tRNA(Ile)-dependent editing activities. One activity is designated as 'pretransfer' editing and involves the hydrolysis of activated Val-AMP. The other activity is designated 'posttransfer' editing and involves deacylation of mischarged Val-tRNA(Ile). This chain is Isoleucine--tRNA ligase, found in Bacillus cereus (strain AH820).